The sequence spans 415 residues: T-cell-specific guanine nucleotide triphosphate-binding protein 1 (415 aa).

In terms of domain architecture, IRG-type G spans 55–237 (APLHIAVTGE…PKLETKLLQD (183 aa)). GDP contacts are provided by Gly66, Gly68, Lys69, and Ser70. The residue at position 89 (Thr89) is a (Microbial infection) Phosphothreonine; by ROP17. GDP-binding residues include Gly90, Lys171, Asp173, and Asn219.

This sequence belongs to the TRAFAC class dynamin-like GTPase superfamily. IRG family. In terms of assembly, monomer, homodimer or homotetramer in the presence of GTP. Forms higher order homooligomers in GTP-dependent manner. As to quaternary structure, (Microbial infection) Interacts with Toxoplasma gondii ROP18. Post-translationally, (Microbial infection) Phosphorylated by Toxoplasma gondii ROP17; the phosphorylation leads to disassembly of IRGB6 (TGTP1/TGTP2) polymers into monomers and dimers. Phosphorylated by Toxoplasma gondii ROP18. In terms of tissue distribution, expressed in thymus and lymph nodes, predominantly T-cells. Not expressed by immature CD4(+) CD8(+) thymocytes (at protein level). Expressed in IFNG-stimulated macrophages. Expressed at low levels in unstimulated astrocytes. Due to sequence similarity with Tgtp2, it is impossible to assign unambiguously experimental data published in the literature to Tgtp1 or Tgtp2 gene.

It is found in the cytoplasm. It localises to the endoplasmic reticulum. Its subcellular location is the golgi apparatus. The protein localises to the parasitophorous vacuole membrane. It catalyses the reaction GTP + H2O = GDP + phosphate + H(+). Involved in innate cell-autonomous resistance to intracellular pathogens, such as Toxoplasma gondii. During avirulent type II T.gondii infection, recruited to the parasitophorous vacuole (PV) membrane, leading to PV vesiculation and rupture, and subsequent digestion of the parasite within the cytosol. Not recruited to virulent type I T.gondii PV membrane. May confer an antiviral state for vesicular stomatitis virus. This is T-cell-specific guanine nucleotide triphosphate-binding protein 1 (Tgtp1) from Mus musculus (Mouse).